Reading from the N-terminus, the 289-residue chain is Sphingomyelinase D (289 aa).

An N-terminal signal peptide occupies residues 1 to 22 (MQSISVLICVLLALSILNFTVA). Residue histidine 34 is part of the active site. Glutamate 54, aspartate 56, and aspartate 103 together coordinate Mg(2+). Residues 282–289 (ATEDDAPW) carry the SMD-tail motif.

Belongs to the sphingomyelinase D/phospholipase D family. It depends on Mg(2+) as a cofactor.

The protein resides in the secreted. The catalysed reaction is a sphingomyelin + H2O = an N-acylsphing-4-enine 1-phosphate + choline + H(+). With respect to regulation, sphingomyelinase activity is reduced by 33 percent following addition of EDTA. Functionally, catalyzes the hydrolysis of sphingomyelin. Sphingomyelinases D are produced by some spider in their venoms, but also by arthropods such as ticks, or pathogenic bacteria and fungi. They might play a role in pathogenicity through different mechanisms, such as membrane destabilization and host cell penetration, but also pulmonary inflammation and cutaneous lesions. This chain is Sphingomyelinase D, found in Aspergillus flavus (strain ATCC 200026 / FGSC A1120 / IAM 13836 / NRRL 3357 / JCM 12722 / SRRC 167).